We begin with the raw amino-acid sequence, 140 residues long: Tumor protein D55 (140 aa).

Residues 1-28 (MPHARTETSVGTYESHSTSELEDLTEPE) form a disordered region. Residues 7-18 (ETSVGTYESHST) are compositionally biased toward polar residues. The stretch at 28 to 57 (EQRELKTKLTKLEAEIVTLRHVLAAKERRC) forms a coiled coil.

It belongs to the TPD52 family. Interacts with TPD52L2. In terms of tissue distribution, specifically expressed in testis. Expressed at 5.6-fold higher levels in adult testis than in fetal testis.

This chain is Tumor protein D55 (TPD52L3), found in Homo sapiens (Human).